We begin with the raw amino-acid sequence, 311 residues long: Methionyl-tRNA formyltransferase (311 aa).

110 to 113 (SLLP) contacts (6S)-5,6,7,8-tetrahydrofolate.

It belongs to the Fmt family.

The enzyme catalyses L-methionyl-tRNA(fMet) + (6R)-10-formyltetrahydrofolate = N-formyl-L-methionyl-tRNA(fMet) + (6S)-5,6,7,8-tetrahydrofolate + H(+). Functionally, attaches a formyl group to the free amino group of methionyl-tRNA(fMet). The formyl group appears to play a dual role in the initiator identity of N-formylmethionyl-tRNA by promoting its recognition by IF2 and preventing the misappropriation of this tRNA by the elongation apparatus. This is Methionyl-tRNA formyltransferase from Streptococcus uberis (strain ATCC BAA-854 / 0140J).